Here is a 348-residue protein sequence, read N- to C-terminus: Phosphate acyltransferase (348 aa).

The protein belongs to the PlsX family. As to quaternary structure, homodimer. Probably interacts with PlsY.

It is found in the cytoplasm. It carries out the reaction a fatty acyl-[ACP] + phosphate = an acyl phosphate + holo-[ACP]. The protein operates within lipid metabolism; phospholipid metabolism. Its function is as follows. Catalyzes the reversible formation of acyl-phosphate (acyl-PO(4)) from acyl-[acyl-carrier-protein] (acyl-ACP). This enzyme utilizes acyl-ACP as fatty acyl donor, but not acyl-CoA. This is Phosphate acyltransferase from Francisella tularensis subsp. tularensis (strain FSC 198).